Consider the following 130-residue polypeptide: Small ribosomal subunit protein uS17m (130 aa).

Belongs to the universal ribosomal protein uS17 family. Component of the mitochondrial ribosome small subunit (28S) which comprises a 12S rRNA and about 30 distinct proteins.

It localises to the mitochondrion. In Bos taurus (Bovine), this protein is Small ribosomal subunit protein uS17m (MRPS17).